The sequence spans 412 residues: MASINDNYLKLKAGYLFPEIARRVNAFTTANPNAQVIKLGIGDVTEPLPLACRQAMAKAIDDMGDRQTFKGYGPEQGYAWLREKIAQHDFQARGCEVNAEEIFISDGSKCDTGNILDIFGKDNTIAVTDPVYPVYVDTNVMAGHTGDANEKGEYGGLVYLPISAENDFVAAIPSKKVDLIYLCFPNNPTGATATKAYLKQWVDYALAHGSIIFFDAAYEAFITDPTLPHSIYEIEGARDCAIEFRSFSKNAGFTGTRCALTVVPKTLTAKAADGSDVELWKLWNRRQSTKFNGVSYIIQRGAEAVYSPEGQAQVQELIAFYLENARIIREKLAAAGLQVYGGINAPYVWVKTPHGLSSWDFFDKLLHTVNVVGTPGSGFGAAGEGYFRISAFNSRANVEEAMERITSTLKLG.

Positions 15 and 42 each coordinate substrate. Pyridoxal 5'-phosphate contacts are provided by residues tyrosine 72, serine 108–lysine 109, tyrosine 132, asparagine 187, tyrosine 218, and serine 246–serine 248. Lysine 109, tyrosine 132, and asparagine 187 together coordinate substrate. The residue at position 249 (lysine 249) is an N6-(pyridoxal phosphate)lysine. Residues arginine 257 and asparagine 292 each contribute to the pyridoxal 5'-phosphate site. Asparagine 292 and arginine 388 together coordinate substrate.

Belongs to the class-I pyridoxal-phosphate-dependent aminotransferase family. LL-diaminopimelate aminotransferase subfamily. Homodimer. It depends on pyridoxal 5'-phosphate as a cofactor.

The catalysed reaction is (2S,6S)-2,6-diaminopimelate + 2-oxoglutarate = (S)-2,3,4,5-tetrahydrodipicolinate + L-glutamate + H2O + H(+). Its pathway is amino-acid biosynthesis; L-lysine biosynthesis via DAP pathway; LL-2,6-diaminopimelate from (S)-tetrahydrodipicolinate (aminotransferase route): step 1/1. In terms of biological role, involved in the synthesis of meso-diaminopimelate (m-DAP or DL-DAP), required for both lysine and peptidoglycan biosynthesis. Catalyzes the direct conversion of tetrahydrodipicolinate to LL-diaminopimelate. The sequence is that of LL-diaminopimelate aminotransferase from Synechocystis sp. (strain ATCC 27184 / PCC 6803 / Kazusa).